Here is a 283-residue protein sequence, read N- to C-terminus: MGEYIVTKTLNNNVVVCTNNDQEVILIGKGIGFNKKEGMTLNDQTITIEKIYKLESEQQKAHYKSLVEIADDNVLQVIIDSLNFISNTAMNVDSKQLVVSLTDHIIFAYKRLKQNQVISNPFVMETMQLYSDAYHIAKQVIDQLNAALDVHFPEDEIGFIALHIASNTEDLSMHEMTLINNVIKKGIDIIESDLVTTVDKESLQYQRFIRHVQFLIRRLRRKEYIHAQDDFVSMIKNHYPICYNTAYKILTMIQKQFDVNISESEIIYLTLHIHHFEERINQS.

PRD domains follow at residues isoleucine 69–methionine 173 and histidine 174–serine 283.

The protein belongs to the transcriptional antiterminator BglG family. GlcT subfamily.

This chain is Protein GlcT (glcT), found in Staphylococcus aureus (strain MRSA252).